Here is a 315-residue protein sequence, read N- to C-terminus: tRNA dimethylallyltransferase (315 aa).

Residue 15 to 22 (GPTACGKS) coordinates ATP. Residue 17 to 22 (TACGKS) coordinates substrate. 2 interaction with substrate tRNA regions span residues 40–43 (DSAL) and 162–166 (QRLIR).

It belongs to the IPP transferase family. In terms of assembly, monomer. The cofactor is Mg(2+).

The enzyme catalyses adenosine(37) in tRNA + dimethylallyl diphosphate = N(6)-dimethylallyladenosine(37) in tRNA + diphosphate. Catalyzes the transfer of a dimethylallyl group onto the adenine at position 37 in tRNAs that read codons beginning with uridine, leading to the formation of N6-(dimethylallyl)adenosine (i(6)A). This is tRNA dimethylallyltransferase from Buchnera aphidicola subsp. Acyrthosiphon pisum (strain APS) (Acyrthosiphon pisum symbiotic bacterium).